Reading from the N-terminus, the 60-residue chain is Large ribosomal subunit protein uL30 (60 aa).

The protein belongs to the universal ribosomal protein uL30 family. In terms of assembly, part of the 50S ribosomal subunit.

The protein is Large ribosomal subunit protein uL30 of Ralstonia pickettii (strain 12J).